Consider the following 369-residue polypeptide: Allantoicase (369 aa).

Positions 341 to 369 (PDSKNNNNNNNNNNNNNTSNSFKTSDRQQ) are disordered. The segment covering 345-357 (NNNNNNNNNNNNN) has biased composition (low complexity).

This sequence belongs to the allantoicase family.

The enzyme catalyses allantoate + H2O = (S)-ureidoglycolate + urea. It functions in the pathway nitrogen metabolism; (S)-allantoin degradation; (S)-ureidoglycolate from allantoate (aminidohydrolase route): step 1/1. In terms of biological role, utilization of purines as secondary nitrogen sources, when primary sources are limiting. This chain is Allantoicase (allC), found in Dictyostelium discoideum (Social amoeba).